A 517-amino-acid polypeptide reads, in one-letter code: MALSLRACILLLKEHHLLKSAAIQNTEDVDMTGIAYDSRKVSGPTLFFCKGDKFRPIYLSMAKDNGARTYVAEKPYVEGNGLNALIVRNITKAMAILSAAFFDYPQDDLFVIAYTGTKGKTTASYFTEAILNEARPRHIALFSTIDTVVGPEPDQRFKSNLTTPESLDLFRDMREAVENGMTHLVMEVSSQAYLRNRVFGLTYDVGFFLNITPDHIGPNEHPTFANYLHNKLQLLVNARKVVINAETEHFDQVYAAATTTTYPESIYLFASAGFRPKRDDIDIDFRFDSQEADVAESRFTLVPVTEKAAALNIGGHYSLALIGDFNESNATAAIIGAGLAGVDASAAVPGIAKVKIPGRMEHTKVAGHGAVYVDYAHNYASMKALLSFLKHAYKDPRLLVVVGSPGDKGVSRRPGFAKVLTEFATEAFLTTDDPGYEDPANIIEEIDSKIDHSKVKVHKVLDRKKAIAEAISDSGPNDIVVVAGKGADPYQKVRGVNTPWPTDMAVVKQVAKSLQEG.

Serine 38 contacts UDP-N-acetyl-alpha-D-muramoyl-L-alanyl-D-glutamate. ATP is bound at residue 116 to 122 (GTKGKTT). UDP-N-acetyl-alpha-D-muramoyl-L-alanyl-D-glutamate-binding positions include asparagine 160, 162–163 (TT), serine 189, and arginine 197. Lysine 231 is subject to N6-carboxylysine.

This sequence belongs to the MurCDEF family. MurE subfamily. Carboxylation is probably crucial for Mg(2+) binding and, consequently, for the gamma-phosphate positioning of ATP.

Its subcellular location is the cytoplasm. The protein operates within cell wall biogenesis; peptidoglycan biosynthesis. Its function is as follows. Catalyzes the addition of an amino acid to the nucleotide precursor UDP-N-acetylmuramoyl-L-alanyl-D-glutamate (UMAG) in the biosynthesis of bacterial cell-wall peptidoglycan. This is UDP-N-acetylmuramyl-tripeptide synthetase from Lacticaseibacillus paracasei (strain ATCC 334 / BCRC 17002 / CCUG 31169 / CIP 107868 / KCTC 3260 / NRRL B-441) (Lactobacillus paracasei).